The chain runs to 99 residues: Integration host factor subunit alpha (99 aa).

It belongs to the bacterial histone-like protein family. In terms of assembly, heterodimer of an alpha and a beta chain.

In terms of biological role, this protein is one of the two subunits of integration host factor, a specific DNA-binding protein that functions in genetic recombination as well as in transcriptional and translational control. This Nitrosococcus oceani (strain ATCC 19707 / BCRC 17464 / JCM 30415 / NCIMB 11848 / C-107) protein is Integration host factor subunit alpha.